The sequence spans 286 residues: Polyamine aminopropyltransferase (286 aa).

The region spanning 5 to 238 is the PABS domain; it reads TMWHETLHDQ…GIMTFAWATD (234 aa). An S-methyl-5'-thioadenosine-binding site is contributed by Gln-33. Positions 64 and 88 each coordinate spermidine. S-methyl-5'-thioadenosine is bound by residues Glu-108 and 140 to 141; that span reads DG. Catalysis depends on Asp-158, which acts as the Proton acceptor. Residue 158 to 161 participates in spermidine binding; the sequence is DCTD. Residue Pro-165 participates in S-methyl-5'-thioadenosine binding.

It belongs to the spermidine/spermine synthase family. Homodimer or homotetramer.

Its subcellular location is the cytoplasm. The enzyme catalyses S-adenosyl 3-(methylsulfanyl)propylamine + putrescine = S-methyl-5'-thioadenosine + spermidine + H(+). The protein operates within amine and polyamine biosynthesis; spermidine biosynthesis; spermidine from putrescine: step 1/1. Catalyzes the irreversible transfer of a propylamine group from the amino donor S-adenosylmethioninamine (decarboxy-AdoMet) to putrescine (1,4-diaminobutane) to yield spermidine. The protein is Polyamine aminopropyltransferase of Salmonella arizonae (strain ATCC BAA-731 / CDC346-86 / RSK2980).